A 419-amino-acid chain; its full sequence is Potassium/proton antiporter CemA (419 aa).

The next 4 membrane-spanning stretches (helical) occupy residues 196-216 (LASI…TLLF), 297-317 (IIEL…LCIA), 344-364 (ILLI…EVLI), and 371-391 (FGFV…PVVL).

Belongs to the CemA family.

It is found in the plastid. The protein localises to the chloroplast inner membrane. The catalysed reaction is K(+)(in) + H(+)(out) = K(+)(out) + H(+)(in). Its function is as follows. Contributes to K(+)/H(+) antiport activity by supporting proton efflux to control proton extrusion and homeostasis in chloroplasts in a light-dependent manner to modulate photosynthesis. Prevents excessive induction of non-photochemical quenching (NPQ) under continuous-light conditions. Indirectly promotes efficient inorganic carbon uptake into chloroplasts. This Chara vulgaris (Common stonewort) protein is Potassium/proton antiporter CemA.